A 471-amino-acid polypeptide reads, in one-letter code: 6-phosphogluconate dehydrogenase, decarboxylating (471 aa).

Residues 10–15 (GLAVMG), 33–35 (NRT), 75–77 (VKA), and asparagine 103 each bind NADP(+). Substrate-binding positions include asparagine 103 and 129–131 (SGG). Lysine 183 serves as the catalytic Proton acceptor. 186 to 187 (HN) serves as a coordination point for substrate. The active-site Proton donor is the glutamate 190. Substrate contacts are provided by tyrosine 191, lysine 263, arginine 290, arginine 449, and histidine 455.

This sequence belongs to the 6-phosphogluconate dehydrogenase family. Homodimer.

It carries out the reaction 6-phospho-D-gluconate + NADP(+) = D-ribulose 5-phosphate + CO2 + NADPH. The protein operates within carbohydrate degradation; pentose phosphate pathway; D-ribulose 5-phosphate from D-glucose 6-phosphate (oxidative stage): step 3/3. Functionally, catalyzes the oxidative decarboxylation of 6-phosphogluconate to ribulose 5-phosphate and CO(2), with concomitant reduction of NADP to NADPH. In Synechococcus elongatus (strain ATCC 33912 / PCC 7942 / FACHB-805) (Anacystis nidulans R2), this protein is 6-phosphogluconate dehydrogenase, decarboxylating (gnd).